A 244-amino-acid polypeptide reads, in one-letter code: Uridylate kinase (244 aa).

K12–G15 contacts ATP. The segment at G20–G25 is involved in allosteric activation by GTP. G54 is a UMP binding site. Residues G55 and R59 each coordinate ATP. Residues D74 and I135 to T142 contribute to the UMP site. Residues N163, Y169, and D172 each coordinate ATP.

It belongs to the UMP kinase family. As to quaternary structure, homohexamer.

Its subcellular location is the cytoplasm. It carries out the reaction UMP + ATP = UDP + ADP. The protein operates within pyrimidine metabolism; CTP biosynthesis via de novo pathway; UDP from UMP (UMPK route): step 1/1. Its activity is regulated as follows. Allosterically activated by GTP. Inhibited by UTP. Catalyzes the reversible phosphorylation of UMP to UDP. The polypeptide is Uridylate kinase (Streptococcus suis (strain 98HAH33)).